A 410-amino-acid chain; its full sequence is PHAF1 protein At3g51130 (410 aa).

The protein belongs to the PHAF1 family.

The sequence is that of PHAF1 protein At3g51130 from Arabidopsis thaliana (Mouse-ear cress).